A 388-amino-acid polypeptide reads, in one-letter code: Succinate--CoA ligase [ADP-forming] subunit beta (388 aa).

The ATP-grasp domain occupies 9–244 (KQLFAEFGLP…PSQEDEREAH (236 aa)). Residues Lys-46, 53 to 55 (GRG), Glu-99, Ser-102, and Glu-107 contribute to the ATP site. Residues Asn-199 and Asp-213 each coordinate Mg(2+). Substrate contacts are provided by residues Asn-264 and 321–323 (GIV).

Belongs to the succinate/malate CoA ligase beta subunit family. In terms of assembly, heterotetramer of two alpha and two beta subunits. Mg(2+) is required as a cofactor.

It catalyses the reaction succinate + ATP + CoA = succinyl-CoA + ADP + phosphate. It carries out the reaction GTP + succinate + CoA = succinyl-CoA + GDP + phosphate. It participates in carbohydrate metabolism; tricarboxylic acid cycle; succinate from succinyl-CoA (ligase route): step 1/1. Succinyl-CoA synthetase functions in the citric acid cycle (TCA), coupling the hydrolysis of succinyl-CoA to the synthesis of either ATP or GTP and thus represents the only step of substrate-level phosphorylation in the TCA. The beta subunit provides nucleotide specificity of the enzyme and binds the substrate succinate, while the binding sites for coenzyme A and phosphate are found in the alpha subunit. The polypeptide is Succinate--CoA ligase [ADP-forming] subunit beta (Vibrio campbellii (strain ATCC BAA-1116)).